The primary structure comprises 131 residues: Mesogenin-1 (131 aa).

Positions 22-79 (EDRSFGDSASSPESESFDSACSSPDARSSPTAGCEHAEQQKPKVKMSMRRRMKASERE) are disordered. The segment covering 27–45 (GDSASSPESESFDSACSSP) has biased composition (low complexity). The segment covering 63 to 73 (PKVKMSMRRRM) has biased composition (basic residues). One can recognise a bHLH domain in the interval 70–124 (RRRMKASEREKLRMRSLAEALHQLRDYLPPGYSRRGQPLTKIQTLKYTIQYIKEL).

In terms of tissue distribution, coexpression of ntl and spt is required for expression.

It is found in the nucleus. Its function is as follows. Involved in specifying the paraxial, but not dorsal, mesoderm. May regulate the expression of T-box transcription factors required for mesoderm formation and differentiation. In Danio rerio (Zebrafish), this protein is Mesogenin-1 (msgn1).